Consider the following 489-residue polypeptide: Retinoblastoma-binding protein 5 homolog (489 aa).

6 WD repeats span residues 22–63 (DCIS…KIIS), 64–103 (AHVH…LEHK), 147–187 (DSDG…VVAS), 195–234 (SSAT…TLGK), 248–290 (VNKT…KILH), and 292–330 (TKGE…NWSA). The disordered stretch occupies residues 451 to 489 (DVSLPDAPTDETHPLISSKASKDKQQPVGGKKAAGRTKK).

Core component of several methyltransferase-containing complexes. Component of the SET1 complex, composed at least of the catalytic subunit Set1, wds/WDR5, Wdr82, Rbbp5, ash2, Cfp1/CXXC1, hcf and Dpy-30L1. Component of the MLL3/4 complex composed at least of the catalytic subunit trr, ash2, Rbbp5, Dpy-30L1, wds, hcf, ptip, Pa1, Utx, Lpt and Ncoa6.

The protein resides in the nucleus. Functionally, component of the SET1 complex that specifically di- and trimethylates 'Lys-4' of histone H3 and of the MLL3/4 complex which also methylates histone H3 'Lys-4'. This chain is Retinoblastoma-binding protein 5 homolog, found in Drosophila melanogaster (Fruit fly).